A 247-amino-acid chain; its full sequence is 3-deoxy-manno-octulosonate cytidylyltransferase (247 aa).

This sequence belongs to the KdsB family.

Its subcellular location is the cytoplasm. It carries out the reaction 3-deoxy-alpha-D-manno-oct-2-ulosonate + CTP = CMP-3-deoxy-beta-D-manno-octulosonate + diphosphate. The protein operates within nucleotide-sugar biosynthesis; CMP-3-deoxy-D-manno-octulosonate biosynthesis; CMP-3-deoxy-D-manno-octulosonate from 3-deoxy-D-manno-octulosonate and CTP: step 1/1. It functions in the pathway bacterial outer membrane biogenesis; lipopolysaccharide biosynthesis. Activates KDO (a required 8-carbon sugar) for incorporation into bacterial lipopolysaccharide in Gram-negative bacteria. The chain is 3-deoxy-manno-octulosonate cytidylyltransferase from Methylobacterium sp. (strain 4-46).